Reading from the N-terminus, the 154-residue chain is Aspartate carbamoyltransferase regulatory chain (154 aa).

Positions 109, 114, 138, and 141 each coordinate Zn(2+).

This sequence belongs to the PyrI family. Contains catalytic and regulatory chains. It depends on Zn(2+) as a cofactor.

Involved in allosteric regulation of aspartate carbamoyltransferase. This is Aspartate carbamoyltransferase regulatory chain from Aeromonas salmonicida (strain A449).